The chain runs to 126 residues: UPF0738 protein BH2850 (126 aa).

The protein belongs to the UPF0738 family.

This chain is UPF0738 protein BH2850, found in Halalkalibacterium halodurans (strain ATCC BAA-125 / DSM 18197 / FERM 7344 / JCM 9153 / C-125) (Bacillus halodurans).